A 392-amino-acid polypeptide reads, in one-letter code: S-adenosylmethionine synthase (392 aa).

His17 contributes to the ATP binding site. Mg(2+) is bound at residue Asp19. A K(+)-binding site is contributed by Glu45. 2 residues coordinate L-methionine: Glu58 and Gln102. The segment at Gln102 to Ala112 is flexible loop. ATP contacts are provided by residues Asp169–Lys171, Lys235–Phe236, Asp244, Arg250–Lys251, Ala267, and Lys271. Position 244 (Asp244) interacts with L-methionine. L-methionine is bound at residue Lys275.

It belongs to the AdoMet synthase family. As to quaternary structure, homotetramer; dimer of dimers. The cofactor is Mg(2+). It depends on K(+) as a cofactor.

Its subcellular location is the cytoplasm. The catalysed reaction is L-methionine + ATP + H2O = S-adenosyl-L-methionine + phosphate + diphosphate. Its pathway is amino-acid biosynthesis; S-adenosyl-L-methionine biosynthesis; S-adenosyl-L-methionine from L-methionine: step 1/1. In terms of biological role, catalyzes the formation of S-adenosylmethionine (AdoMet) from methionine and ATP. The overall synthetic reaction is composed of two sequential steps, AdoMet formation and the subsequent tripolyphosphate hydrolysis which occurs prior to release of AdoMet from the enzyme. The protein is S-adenosylmethionine synthase of Methylobacterium sp. (strain 4-46).